Here is a 241-residue protein sequence, read N- to C-terminus: tRNA pseudouridine synthase A (241 aa).

The active-site Nucleophile is Asp-52. Position 111 (Tyr-111) interacts with substrate.

The protein belongs to the tRNA pseudouridine synthase TruA family. Homodimer.

The enzyme catalyses uridine(38/39/40) in tRNA = pseudouridine(38/39/40) in tRNA. In terms of biological role, formation of pseudouridine at positions 38, 39 and 40 in the anticodon stem and loop of transfer RNAs. This Ureaplasma parvum serovar 3 (strain ATCC 27815 / 27 / NCTC 11736) protein is tRNA pseudouridine synthase A.